Reading from the N-terminus, the 420-residue chain is Tyrosine--tRNA ligase (420 aa).

Tyrosine 33 provides a ligand contact to L-tyrosine. The 'HIGH' region motif lies at 38 to 47; that stretch reads PTADSLHIGH. Tyrosine 168 and glutamine 172 together coordinate L-tyrosine. Residues 231-235 carry the 'KMSKS' region motif; that stretch reads KFGKT. Lysine 234 lines the ATP pocket. The 67-residue stretch at 353–419 folds into the S4 RNA-binding domain; it reads MLLVDALIKV…GKKNYYLVKL (67 aa).

It belongs to the class-I aminoacyl-tRNA synthetase family. TyrS type 1 subfamily. In terms of assembly, homodimer.

It is found in the cytoplasm. It carries out the reaction tRNA(Tyr) + L-tyrosine + ATP = L-tyrosyl-tRNA(Tyr) + AMP + diphosphate + H(+). Its function is as follows. Catalyzes the attachment of tyrosine to tRNA(Tyr) in a two-step reaction: tyrosine is first activated by ATP to form Tyr-AMP and then transferred to the acceptor end of tRNA(Tyr). This is Tyrosine--tRNA ligase from Desulfitobacterium hafniense (strain Y51).